The primary structure comprises 438 residues: Serine hydroxymethyltransferase 1 (438 aa).

(6S)-5,6,7,8-tetrahydrofolate contacts are provided by residues leucine 130 and 134–136; that span reads GHL. The residue at position 239 (lysine 239) is an N6-(pyridoxal phosphate)lysine.

This sequence belongs to the SHMT family. As to quaternary structure, homodimer. It depends on pyridoxal 5'-phosphate as a cofactor.

Its subcellular location is the cytoplasm. It catalyses the reaction (6R)-5,10-methylene-5,6,7,8-tetrahydrofolate + glycine + H2O = (6S)-5,6,7,8-tetrahydrofolate + L-serine. It functions in the pathway one-carbon metabolism; tetrahydrofolate interconversion. The protein operates within amino-acid biosynthesis; glycine biosynthesis; glycine from L-serine: step 1/1. Catalyzes the reversible interconversion of serine and glycine with tetrahydrofolate (THF) serving as the one-carbon carrier. This reaction serves as the major source of one-carbon groups required for the biosynthesis of purines, thymidylate, methionine, and other important biomolecules. Also exhibits THF-independent aldolase activity toward beta-hydroxyamino acids, producing glycine and aldehydes, via a retro-aldol mechanism. Thus, is able to catalyze the cleavage of L-allo-threonine. The chain is Serine hydroxymethyltransferase 1 from Mycobacterium tuberculosis (strain ATCC 25618 / H37Rv).